A 381-amino-acid chain; its full sequence is Protein COS1 (381 aa).

At 1–42 (MKENELKNEKSVDVLSFKQLESQKIVLPQDLFRSSFTWFCYE) the chain is on the cytoplasmic side. The chain crosses the membrane as a helical span at residues 43–63 (IYKSLAFRIWMLLWLPLSVWW). Residues 64–72 (KLSNNCIYP) are Extracellular-facing. A helical transmembrane segment spans residues 73 to 93 (LIVSLLVLFLGPIFVLVICGL). Topologically, residues 94 to 231 (SRKRSLSKQL…YRFKLTWFLK (138 aa)) are cytoplasmic. A helical transmembrane segment spans residues 232–252 (RISNIFMLIPFLNFLCCIYVS). Residues 253 to 254 (RG) lie on the Extracellular side of the membrane. The chain crosses the membrane as a helical span at residues 255 to 275 (MCLLLRTFYLGWILFMLVQGF). Over 276 to 381 (QNMRMIVLSV…QLSCSEESLA (106 aa)) the chain is Cytoplasmic.

It belongs to the DUP/COS family.

It localises to the membrane. The chain is Protein COS1 (COS1) from Saccharomyces cerevisiae (strain ATCC 204508 / S288c) (Baker's yeast).